Reading from the N-terminus, the 127-residue chain is Large ribosomal subunit protein bL12 (127 aa).

This sequence belongs to the bacterial ribosomal protein bL12 family. Homodimer. Part of the ribosomal stalk of the 50S ribosomal subunit. Forms a multimeric L10(L12)X complex, where L10 forms an elongated spine to which 2 to 4 L12 dimers bind in a sequential fashion. Binds GTP-bound translation factors.

In terms of biological role, forms part of the ribosomal stalk which helps the ribosome interact with GTP-bound translation factors. Is thus essential for accurate translation. This Streptomyces avermitilis (strain ATCC 31267 / DSM 46492 / JCM 5070 / NBRC 14893 / NCIMB 12804 / NRRL 8165 / MA-4680) protein is Large ribosomal subunit protein bL12.